The chain runs to 181 residues: MSESVTQQVFNFAVTKSQPFGGYVYSTNLTASTSSAVTSTQLTPLNLSITLGQITLSGNSLVIPATQIWYLTDAYVSVPDYTNITNGAEADGVILIYKDGVKLMLTTPLISSMSISNPARTHLAQAVKYSPQSILTMYFNPTKPATASTSYPNTVYFTVVVVDFSYAQNPARAVVSANAVM.

Its subcellular location is the virion. In terms of biological role, VP4 self-assembles to form, together with capsid protein VP10, an icosahedral caspid of 87 nm in diameter, with a T=43 symmetry and composed of 420 hexamers and 12 pentamers. VP4 proteins arrange into hexons, while VP10 proteins form the pentameric densities located at the 5-fold axes in the virion. The stoichiometry of VP4:VP10 is 42:1. The sequence is that of Capsid protein VP4 from Sulfolobus (SPV1).